Reading from the N-terminus, the 407-residue chain is Argininosuccinate synthase (407 aa).

10-18 is a binding site for ATP; sequence AYSGGLDTS. L-citrulline is bound by residues tyrosine 88 and serine 93. Glycine 118 provides a ligand contact to ATP. The L-aspartate site is built by threonine 120, asparagine 124, and aspartate 125. Asparagine 124 is an L-citrulline binding site. The L-citrulline site is built by arginine 128, serine 177, serine 186, glutamate 263, and tyrosine 275.

This sequence belongs to the argininosuccinate synthase family. Type 1 subfamily. Homotetramer.

The protein resides in the cytoplasm. It catalyses the reaction L-citrulline + L-aspartate + ATP = 2-(N(omega)-L-arginino)succinate + AMP + diphosphate + H(+). Its pathway is amino-acid biosynthesis; L-arginine biosynthesis; L-arginine from L-ornithine and carbamoyl phosphate: step 2/3. In Clostridium botulinum (strain Alaska E43 / Type E3), this protein is Argininosuccinate synthase.